We begin with the raw amino-acid sequence, 410 residues long: Regulator of microtubule dynamics protein 2 (410 aa).

The chain crosses the membrane as a helical span at residues 9–28 (LILGIMAGTAGISLLAFWYH). At Ser51 the chain carries Phosphoserine. Residues 69-110 (QRRQLQILEKLNELLTNMEELKEEIRFLKETIPKLEECIQDE) are a coiled coil. Residues 120–151 (ISPQHRARKKKGTTVQRSATSNSSEEAESEGG) form a disordered region. Position 121 is a phosphoserine (Ser121). Over residues 121–131 (SPQHRARKKKG) the composition is skewed to basic residues. At Thr139 the chain carries Phosphothreonine. At Tyr152 the chain carries Phosphotyrosine. Phosphothreonine is present on residues Thr154 and Thr157.

It belongs to the RMDN family. As to quaternary structure, interacts with microtubules.

It is found in the membrane. The protein localises to the cytoplasm. The protein resides in the cytoskeleton. Its subcellular location is the spindle. It localises to the spindle pole. This chain is Regulator of microtubule dynamics protein 2 (Rmdn2), found in Mus musculus (Mouse).